The chain runs to 489 residues: Rhamnulokinase (489 aa).

ATP is bound at residue 13 to 17 (ASSGR). Residues cysteine 68 and cysteine 222 are joined by a disulfide bond. Residues glycine 83 and 236-238 (HDT) each bind substrate. Aspartate 237 serves as the catalytic Proton acceptor. Residue threonine 259 coordinates ATP. Residue asparagine 296 coordinates substrate. Glutamine 304 provides a ligand contact to ATP. A disulfide bond links cysteine 353 and cysteine 370. Glycine 402 contacts ATP. Cysteine 413 and cysteine 417 form a disulfide bridge.

Belongs to the rhamnulokinase family. The cofactor is Mg(2+).

The enzyme catalyses L-rhamnulose + ATP = L-rhamnulose 1-phosphate + ADP + H(+). It functions in the pathway carbohydrate degradation; L-rhamnose degradation; glycerone phosphate from L-rhamnose: step 2/3. Involved in the catabolism of L-rhamnose (6-deoxy-L-mannose). Catalyzes the transfer of the gamma-phosphate group from ATP to the 1-hydroxyl group of L-rhamnulose to yield L-rhamnulose 1-phosphate. The sequence is that of Rhamnulokinase from Salmonella schwarzengrund (strain CVM19633).